Consider the following 221-residue polypeptide: Glutathione peroxidase 6 (221 aa).

The N-terminal stretch at 1-19 is a signal peptide; sequence MFQQFQASCLVLFFLVGFA. Sec-73 is an active-site residue. Residue Sec-73 is a non-standard amino acid, selenocysteine.

This sequence belongs to the glutathione peroxidase family. As to expression, expressed in olfactory epithelium and embryos.

It is found in the secreted. The enzyme catalyses 2 glutathione + H2O2 = glutathione disulfide + 2 H2O. The chain is Glutathione peroxidase 6 (GPX6) from Homo sapiens (Human).